The following is a 288-amino-acid chain: uncharacterized protein (288 aa).

The HTH rpiR-type domain maps to 5–81; that stretch reads GNVLNKIGSL…LELSIELATK (77 aa). A DNA-binding region (H-T-H motif) is located at residues 41-60; sequence LSEIAKHLQVGEATLVRFCR. An SIS domain is found at 129–269; it reads VVKVLKKARR…YALLVQGEED (141 aa).

This is an uncharacterized protein from Haemophilus influenzae (strain ATCC 51907 / DSM 11121 / KW20 / Rd).